The sequence spans 179 residues: Large ribosomal subunit protein uL5 (179 aa).

It belongs to the universal ribosomal protein uL5 family. Part of the 50S ribosomal subunit; part of the 5S rRNA/L5/L18/L25 subcomplex. Contacts the 5S rRNA and the P site tRNA. Forms a bridge to the 30S subunit in the 70S ribosome.

This is one of the proteins that bind and probably mediate the attachment of the 5S RNA into the large ribosomal subunit, where it forms part of the central protuberance. In the 70S ribosome it contacts protein S13 of the 30S subunit (bridge B1b), connecting the 2 subunits; this bridge is implicated in subunit movement. Contacts the P site tRNA; the 5S rRNA and some of its associated proteins might help stabilize positioning of ribosome-bound tRNAs. The sequence is that of Large ribosomal subunit protein uL5 from Natranaerobius thermophilus (strain ATCC BAA-1301 / DSM 18059 / JW/NM-WN-LF).